A 57-amino-acid polypeptide reads, in one-letter code: Conotoxin Cal6.34 (57 aa).

The signal sequence occupies residues methionine 1–alanine 22. Intrachain disulfides connect cysteine 26/cysteine 37, cysteine 29/cysteine 43, and cysteine 36/cysteine 54.

Belongs to the conotoxin O1 superfamily. Expressed by the venom duct.

The protein resides in the secreted. In terms of biological role, probable neurotoxin. The protein is Conotoxin Cal6.34 of Californiconus californicus (California cone).